The primary structure comprises 409 residues: Triose phosphate/phosphate translocator, chloroplastic (409 aa).

The transit peptide at 1–85 (MSALGTLSGG…ARRHTLQPPA (85 aa)) directs the protein to the chloroplast. Residues 86-104 (AAAESAGEAKSVGFLEKYP) are Chloroplast intermembrane-facing. Residues 105–125 (ALVTGFFFFMWYFLNVIFNIL) form a helical membrane-spanning segment. Residues 126-137 (NKKIYNYFPYPY) are Lumenal-facing. A helical transmembrane segment spans residues 138–158 (FVSLIHLVVGVVYCLISWSVG). Residues 159 to 215 (LPKRAPINGTLLKLLFPVALCHGIGHITSNVSFAAVAVSFAHTIKALEPFFSAAATQ) are Chloroplast intermembrane-facing. Residues 216–236 (FILGQQVPFSLWLSLAPVVIG) traverse the membrane as a helical segment. Residues 237-280 (VSMASLTELSFNWTGFINAMISNISFTYRSIYSKKAMTDMDSTN) lie on the Lumenal side of the membrane. The helical transmembrane segment at 281–300 (VYAYISIIALIVCIPPALIF) threads the bilayer. Over 301 to 378 (EGPKLMQHGF…IVFGNKISTQ (78 aa)) the chain is Chloroplast intermembrane. A helical membrane pass occupies residues 379–399 (TGIGTSIAIAGVAMYSYIKAK). Topologically, residues 400 to 409 (IEEEKRKKSA) are lumenal.

It belongs to the TPT transporter family. TPT (TC 2.A.7.9) subfamily. Homodimer.

The protein localises to the plastid. It is found in the chloroplast membrane. Functionally, mediates the export of fixed carbons from the chloroplasts into the cytosol in the form of triose phosphates. In addition, it can also bind and transport phosphoenolpyruvate, thereby increasing the photosynthetic efficiency of C4-plants. This chain is Triose phosphate/phosphate translocator, chloroplastic (TPT), found in Zea mays (Maize).